The following is a 571-amino-acid chain: Septation ring formation regulator EzrA (571 aa).

Residues 1 to 3 are Extracellular-facing; it reads MYY. Residues 4–22 form a helical membrane-spanning segment; the sequence is MLIGFIIVVIAVISAGYIL. Topologically, residues 23-571 are cytoplasmic; that stretch reads KRKHYQRINE…ESKVSVDDIE (549 aa). Coiled coils occupy residues 170–215, 248–299, 326–374, 400–437, and 478–529; these read EAKL…QMER, LAQM…TLEH, DALA…ASGE, NFAE…ERER, and RIAE…ENHF.

The protein belongs to the EzrA family.

The protein localises to the cell membrane. Its function is as follows. Negative regulator of FtsZ ring formation; modulates the frequency and position of FtsZ ring formation. Inhibits FtsZ ring formation at polar sites. Interacts either with FtsZ or with one of its binding partners to promote depolymerization. The polypeptide is Septation ring formation regulator EzrA (Listeria innocua serovar 6a (strain ATCC BAA-680 / CLIP 11262)).